Reading from the N-terminus, the 65-residue chain is Large ribosomal subunit protein uL29 (65 aa).

It belongs to the universal ribosomal protein uL29 family.

The chain is Large ribosomal subunit protein uL29 from Buchnera aphidicola subsp. Acyrthosiphon pisum (strain 5A).